The sequence spans 174 residues: Early E1A protein (174 aa).

The interaction with RB1 in competition with E2F1 stretch occupies residues 40–48 (PSLHDLFDL). The LXCXE motif, interaction with host RB1 signature appears at 106 to 110 (LLCLE). Residues 145–163 (CLRCAYYQEQGENSICGLC) fold into a zinc finger.

The protein belongs to the adenoviridae E1A protein family. As to quaternary structure, interacts with host UBE2I; this interaction interferes with polySUMOylation. Interacts with host RB1; this interaction induces the aberrant dissociation of RB1-E2F1 complex thereby disrupting the activity of RB1 and activating E2F1-regulated genes. Interacts with host ATF7; the interaction enhances ATF7-mediated viral transactivation activity which requires the zinc binding domains of both proteins. Isoform early E1A 32 kDa protein and isoform early E1A 26 kDa protein interact (via N-terminus) with CUL1 and E3 ubiquitin ligase RBX1; these interactions inhibit RBX1-CUL1-dependent elongation reaction of ubiquitin chains and attenuate ubiquitination of SCF(FBXW7) target proteins. Interacts (via PXLXP motif) with host ZMYND11/BS69 (via MYND-type zinc finger); this interaction inhibits E1A mediated transactivation. Interacts with host EP300; this interaction stimulates the acetylation of RB1 by recruiting EP300 and RB1 into a multimeric-protein complex. Interacts with host CTBP1 and CTBP2; this interaction seems to potentiate viral replication. Interacts with host DCAF7. Interacts with host DYRK1A. Interacts with host KPNA4; this interaction allows E1A import into the host nucleus. Interacts with host EP400; this interaction stabilizes MYC. Interacts with host TBP protein; this interaction probably disrupts the TBP-TATA complex.

Its subcellular location is the host nucleus. Plays a role in viral genome replication by driving entry of quiescent cells into the cell cycle. Stimulation of progression from G1 to S phase allows the virus to efficiently use the cellular DNA replicating machinery to achieve viral genome replication. E1A protein has both transforming and trans-activating activities. Induces the disassembly of the E2F1 transcription factor from RB1 by direct competition for the same binding site on RB1, with subsequent transcriptional activation of E2F1-regulated S-phase genes and of the E2 region of the adenoviral genome. Release of E2F1 leads to the ARF-mediated inhibition of MDM2 and causes TP53/p53 to accumulate because it is not targeted for degradation by MDM2-mediated ubiquitination anymore. This increase in TP53, in turn, would arrest the cell proliferation and direct its death but this effect is counteracted by the viral protein E1B-55K. Inactivation of the ability of RB1 to arrest the cell cycle is critical for cellular transformation, uncontrolled cellular growth and proliferation induced by viral infection. Interaction with RBX1 and CUL1 inhibits ubiquitination of the proteins targeted by SCF(FBXW7) ubiquitin ligase complex, and may be linked to unregulated host cell proliferation. The tumorigenesis-restraining activity of E1A may be related to the disruption of the host CtBP-CtIP complex through the CtBP binding motif. This chain is Early E1A protein, found in Canine adenovirus serotype 1 (strain RI261) (CAdV-1).